The primary structure comprises 457 residues: ADP-dependent glucose/glucosamine kinase (457 aa).

The region spanning 5–457 is the ADPK domain; that stretch reads TNWESLYEKA…SAFVSEFSLH (453 aa). Residues Asp-37, Glu-91, 115 to 116, and His-179 each bind D-glucose; that span reads GQ. Residue Glu-269 coordinates Mg(2+). Asn-295 contacts ADP. Residue Glu-298 participates in Mg(2+) binding. Residues 345–346, Val-432, and Gly-442 each bind ADP; that span reads HT. Asp-443 contacts D-glucose. Mg(2+) is bound at residue Asp-443. The Proton acceptor role is filled by Asp-443.

Belongs to the ADP-dependent glucokinase family. Mg(2+) serves as cofactor.

It localises to the cytoplasm. The enzyme catalyses D-glucose + ADP = D-glucose 6-phosphate + AMP + H(+). The catalysed reaction is D-glucosamine + ADP = D-glucosamine 6-phosphate + AMP + H(+). It functions in the pathway carbohydrate degradation; glycolysis. Its activity is regulated as follows. Inhibited by 8-bromoadenosine phosphate (8-Br-AMP). In terms of biological role, catalyzes the ADP-dependent phosphorylation of D-glucose to D-glucose 6-phosphate and glucosamine to glucosamine 6-phosphate. The protein is ADP-dependent glucose/glucosamine kinase of Pyrococcus horikoshii (strain ATCC 700860 / DSM 12428 / JCM 9974 / NBRC 100139 / OT-3).